The chain runs to 84 residues: Acyl carrier protein (84 aa).

In terms of domain architecture, Carrier spans 1 to 75 (MIFQKIQEFI…DILEYIQQHV (75 aa)). At Ser-35 the chain carries O-(pantetheine 4'-phosphoryl)serine.

The protein belongs to the acyl carrier protein (ACP) family. In terms of processing, 4'-phosphopantetheine is transferred from CoA to a specific serine of apo-ACP by AcpS. This modification is essential for activity because fatty acids are bound in thioester linkage to the sulfhydryl of the prosthetic group.

It is found in the cytoplasm. It participates in lipid metabolism; fatty acid biosynthesis. Functionally, carrier of the growing fatty acid chain in fatty acid biosynthesis. This chain is Acyl carrier protein, found in Phytoplasma mali (strain AT).